The primary structure comprises 190 residues: Holliday junction branch migration complex subunit RuvA (190 aa).

The tract at residues 1–64 is domain I; that stretch reads MIGKLTGTLL…EDAQLLYGFG (64 aa). The tract at residues 65 to 137 is domain II; sequence TAQERQAFRE…LKGKLGADVG (73 aa). The interval 137–141 is flexible linker; that stretch reads GVRAH. Residues 142 to 190 form a domain III region; the sequence is AANDNQADILQALLALGYNDKEAAAALKALPADVGVSEGIKLALKSLSK.

Belongs to the RuvA family. In terms of assembly, homotetramer. Forms an RuvA(8)-RuvB(12)-Holliday junction (HJ) complex. HJ DNA is sandwiched between 2 RuvA tetramers; dsDNA enters through RuvA and exits via RuvB. An RuvB hexamer assembles on each DNA strand where it exits the tetramer. Each RuvB hexamer is contacted by two RuvA subunits (via domain III) on 2 adjacent RuvB subunits; this complex drives branch migration. In the full resolvosome a probable DNA-RuvA(4)-RuvB(12)-RuvC(2) complex forms which resolves the HJ.

The protein resides in the cytoplasm. Functionally, the RuvA-RuvB-RuvC complex processes Holliday junction (HJ) DNA during genetic recombination and DNA repair, while the RuvA-RuvB complex plays an important role in the rescue of blocked DNA replication forks via replication fork reversal (RFR). RuvA specifically binds to HJ cruciform DNA, conferring on it an open structure. The RuvB hexamer acts as an ATP-dependent pump, pulling dsDNA into and through the RuvAB complex. HJ branch migration allows RuvC to scan DNA until it finds its consensus sequence, where it cleaves and resolves the cruciform DNA. The sequence is that of Holliday junction branch migration complex subunit RuvA from Acidovorax sp. (strain JS42).